Reading from the N-terminus, the 93-residue chain is MAQLLGDAEIQSQASKLSGWTLEGSKLQTTRKFKDFIEAIAFVNKLVEPAESAGHHPDIEISYNKVKVTLTTHDAGGLTQKDFDVAATISQIN.

Belongs to the pterin-4-alpha-carbinolamine dehydratase family.

It catalyses the reaction (4aS,6R)-4a-hydroxy-L-erythro-5,6,7,8-tetrahydrobiopterin = (6R)-L-erythro-6,7-dihydrobiopterin + H2O. This is Putative pterin-4-alpha-carbinolamine dehydratase from Trichormus variabilis (strain ATCC 29413 / PCC 7937) (Anabaena variabilis).